Reading from the N-terminus, the 130-residue chain is Small ribosomal subunit protein uS11 (130 aa).

A disordered region spans residues Glu109 to Val130.

This sequence belongs to the universal ribosomal protein uS11 family. In terms of assembly, part of the 30S ribosomal subunit.

Functionally, located on the platform of the 30S subunit. The chain is Small ribosomal subunit protein uS11 from Methanobrevibacter smithii (strain ATCC 35061 / DSM 861 / OCM 144 / PS).